Here is a 327-residue protein sequence, read N- to C-terminus: Methionyl-tRNA formyltransferase (327 aa).

121–124 (SLLP) lines the (6S)-5,6,7,8-tetrahydrofolate pocket.

Belongs to the Fmt family.

The catalysed reaction is L-methionyl-tRNA(fMet) + (6R)-10-formyltetrahydrofolate = N-formyl-L-methionyl-tRNA(fMet) + (6S)-5,6,7,8-tetrahydrofolate + H(+). Attaches a formyl group to the free amino group of methionyl-tRNA(fMet). The formyl group appears to play a dual role in the initiator identity of N-formylmethionyl-tRNA by promoting its recognition by IF2 and preventing the misappropriation of this tRNA by the elongation apparatus. The sequence is that of Methionyl-tRNA formyltransferase from Burkholderia pseudomallei (strain 1106a).